Here is a 354-residue protein sequence, read N- to C-terminus: Uroporphyrinogen decarboxylase (354 aa).

Substrate contacts are provided by residues 30 to 34, D79, Y154, S209, and H333; that span reads RQAGR.

This sequence belongs to the uroporphyrinogen decarboxylase family. As to quaternary structure, homodimer.

Its subcellular location is the cytoplasm. The enzyme catalyses uroporphyrinogen III + 4 H(+) = coproporphyrinogen III + 4 CO2. The protein operates within porphyrin-containing compound metabolism; protoporphyrin-IX biosynthesis; coproporphyrinogen-III from 5-aminolevulinate: step 4/4. In terms of biological role, catalyzes the decarboxylation of four acetate groups of uroporphyrinogen-III to yield coproporphyrinogen-III. The polypeptide is Uroporphyrinogen decarboxylase (Mycobacterium sp. (strain JLS)).